The following is a 246-amino-acid chain: tRNA (guanine-N(1)-)-methyltransferase (246 aa).

Residues G114 and I134–L139 each bind S-adenosyl-L-methionine.

This sequence belongs to the RNA methyltransferase TrmD family. Homodimer.

It localises to the cytoplasm. The enzyme catalyses guanosine(37) in tRNA + S-adenosyl-L-methionine = N(1)-methylguanosine(37) in tRNA + S-adenosyl-L-homocysteine + H(+). Functionally, specifically methylates guanosine-37 in various tRNAs. This chain is tRNA (guanine-N(1)-)-methyltransferase, found in Coxiella burnetii (strain RSA 493 / Nine Mile phase I).